The sequence spans 355 residues: Zinc finger protein CONSTANS-LIKE 1 (355 aa).

Positions 12, 15, 35, 40, 55, 58, 78, and 83 each coordinate Zn(2+). Residues 12-54 (CDTCRSAACTVYCRADSAYLCSSCDAQVHAANRLASRHERVRV) form a B box-type 1; atypical zinc finger. The B box-type 2; atypical zinc-finger motif lies at 55–97 (CQSCERAPAAFFCKADAASLCTTCDSEIHSANPLARRHQRVPI). Positions 252–264 (ESTTSDATVSNPR) are enriched in polar residues. A disordered region spans residues 252-281 (ESTTSDATVSNPRSPKAVTDQPPYPPAQML). Residues 286 to 328 (REARVLRYREKKKMRKFEKTIRYASRKAYAEKRPRIKGRFAKK) form the CCT domain.

It belongs to the CONSTANS family. Highly expressed in leaves and at lower levels in stems, flowers and siliques. Not detected in roots.

The protein resides in the nucleus. Functionally, putative transcription factor that may be involved in the light input to the circadian clock but does not affect flowering time. This Arabidopsis thaliana (Mouse-ear cress) protein is Zinc finger protein CONSTANS-LIKE 1 (COL1).